Here is a 226-residue protein sequence, read N- to C-terminus: MAPTISKRIKTLSVSRPIIYGNTAKKMGSVKPPNAPAEHTHLWTIFVRGPQNEDISYFIKKVVFKLHDTYPNPVRSIEAPPFELTETGWGEFDINIKVYFVEEANEKVLNFYHRLRLHPYANPVPNSDNGNEQNTTDHNSKDAEVSSVYFDEIVFNEPNEEFFKILMSRPGNLLPSNKTDDCVYSKQLEQEEIDRIEIGIEKVDKEIDELKQKLENLVKQEAINGS.

Residues 8 to 169 form the YEATS domain; sequence RIKTLSVSRP…EEFFKILMSR (162 aa). Residues 187–224 are a coiled coil; sequence QLEQEEIDRIEIGIEKVDKEIDELKQKLENLVKQEAIN.

As to quaternary structure, component of the SWR1 chromatin-remodeling complex composed of at least ACT1, ARP4, RVB1, RVB2, ARP6, YAF9, VPS71, VPS72, SWC3, SWC4, SWC5, SWC7 and SWR1, and perhaps BDF1. Component of the NuA4 histone acetyltransferase complex composed of at least ACT1, ARP4, YAF9, VID21, SWC4, EAF3, EAF5, EAF6, EAF7, EPL1, ESA1, TRA1 and YNG2. Interacts with SWC4.

The protein localises to the cytoplasm. It is found in the nucleus. Its function is as follows. Component of the SWR1 complex which mediates the ATP-dependent exchange of histone H2A for the H2A variant HZT1 leading to transcriptional regulation of selected genes by chromatin remodeling. Component of the NuA4 histone acetyltransferase complex which is involved in transcriptional activation of selected genes principally by acetylation of nucleosomal histones H4 and H2A. The NuA4 complex is also involved in DNA repair. Yaf9 may also be required for viability in conditions in which the structural integrity of the spindle is compromised. The polypeptide is Protein AF-9 homolog (YAF9) (Saccharomyces cerevisiae (strain ATCC 204508 / S288c) (Baker's yeast)).